A 474-amino-acid chain; its full sequence is Serine--tRNA ligase (474 aa).

Residue 278 to 280 (TAE) coordinates L-serine. 309-311 (RSE) serves as a coordination point for ATP. Glu332 contacts L-serine. An ATP-binding site is contributed by 396–399 (EISS). Ser432 is a binding site for L-serine.

This sequence belongs to the class-II aminoacyl-tRNA synthetase family. Type-1 seryl-tRNA synthetase subfamily. As to quaternary structure, homodimer. The tRNA molecule binds across the dimer.

It localises to the cytoplasm. The enzyme catalyses tRNA(Ser) + L-serine + ATP = L-seryl-tRNA(Ser) + AMP + diphosphate + H(+). It carries out the reaction tRNA(Sec) + L-serine + ATP = L-seryl-tRNA(Sec) + AMP + diphosphate + H(+). The protein operates within aminoacyl-tRNA biosynthesis; selenocysteinyl-tRNA(Sec) biosynthesis; L-seryl-tRNA(Sec) from L-serine and tRNA(Sec): step 1/1. Functionally, catalyzes the attachment of serine to tRNA(Ser). Is also able to aminoacylate tRNA(Sec) with serine, to form the misacylated tRNA L-seryl-tRNA(Sec), which will be further converted into selenocysteinyl-tRNA(Sec). This is Serine--tRNA ligase from Caulobacter sp. (strain K31).